The following is a 103-amino-acid chain: Large ribosomal subunit protein bL21 (103 aa).

Belongs to the bacterial ribosomal protein bL21 family. In terms of assembly, part of the 50S ribosomal subunit. Contacts protein L20.

Functionally, this protein binds to 23S rRNA in the presence of protein L20. The protein is Large ribosomal subunit protein bL21 of Polaromonas naphthalenivorans (strain CJ2).